Consider the following 132-residue polypeptide: Small ribosomal subunit protein uS8 (132 aa).

The protein belongs to the universal ribosomal protein uS8 family. Part of the 30S ribosomal subunit. Contacts proteins S5 and S12.

One of the primary rRNA binding proteins, it binds directly to 16S rRNA central domain where it helps coordinate assembly of the platform of the 30S subunit. This Xanthomonas campestris pv. campestris (strain 8004) protein is Small ribosomal subunit protein uS8.